The following is a 273-amino-acid chain: HMP-PP phosphatase (273 aa).

Catalysis depends on Asp-8, which acts as the Nucleophile. Positions 8, 10, and 212 each coordinate Mg(2+).

It belongs to the HAD-like hydrolase superfamily. Cof family. It depends on Mg(2+) as a cofactor.

It catalyses the reaction 4-amino-2-methyl-5-(diphosphooxymethyl)pyrimidine + H2O = 4-amino-2-methyl-5-(phosphooxymethyl)pyrimidine + phosphate + H(+). Catalyzes the hydrolysis of 4-amino-2-methyl-5-hydroxymethylpyrimidine pyrophosphate (HMP-PP) to 4-amino-2-methyl-5-hydroxymethylpyrimidine phosphate (HMP-P). The chain is HMP-PP phosphatase from Yersinia pseudotuberculosis serotype O:1b (strain IP 31758).